The chain runs to 392 residues: uncharacterized protein (392 aa).

This sequence belongs to the ROK (NagC/XylR) family.

This is an uncharacterized protein from Sinorhizobium fredii (strain NBRC 101917 / NGR234).